Here is a 309-residue protein sequence, read N- to C-terminus: tRNA dimethylallyltransferase (309 aa).

15–22 (GPTASGKS) provides a ligand contact to ATP. Residue 17–22 (TASGKS) coordinates substrate. Positions 40 to 43 (DSRQ) are interaction with substrate tRNA.

It belongs to the IPP transferase family. In terms of assembly, monomer. Mg(2+) is required as a cofactor.

The enzyme catalyses adenosine(37) in tRNA + dimethylallyl diphosphate = N(6)-dimethylallyladenosine(37) in tRNA + diphosphate. Catalyzes the transfer of a dimethylallyl group onto the adenine at position 37 in tRNAs that read codons beginning with uridine, leading to the formation of N6-(dimethylallyl)adenosine (i(6)A). This chain is tRNA dimethylallyltransferase, found in Chlorobium phaeovibrioides (strain DSM 265 / 1930) (Prosthecochloris vibrioformis (strain DSM 265)).